A 245-amino-acid chain; its full sequence is Adenosine 5'-phosphosulfate reductase (245 aa).

Positions 124, 125, 205, and 208 each coordinate [4Fe-4S] cluster. Catalysis depends on Cys231, which acts as the Nucleophile; cysteine thiosulfonate intermediate.

The protein belongs to the PAPS reductase family. CysH subfamily. It depends on [4Fe-4S] cluster as a cofactor.

It localises to the cytoplasm. The enzyme catalyses [thioredoxin]-disulfide + sulfite + AMP + 2 H(+) = adenosine 5'-phosphosulfate + [thioredoxin]-dithiol. Its pathway is sulfur metabolism; hydrogen sulfide biosynthesis; sulfite from sulfate. Functionally, catalyzes the formation of sulfite from adenosine 5'-phosphosulfate (APS) using thioredoxin as an electron donor. This chain is Adenosine 5'-phosphosulfate reductase, found in Chelativorans sp. (strain BNC1).